The primary structure comprises 447 residues: N-succinylarginine dihydrolase (447 aa).

Substrate-binding positions include 19 to 28, Asn110, and 137 to 138; these read AGLSFGNEAS and HR. The active site involves Glu174. A substrate-binding site is contributed by Arg212. Residue His248 is part of the active site. Substrate contacts are provided by Asp250 and Asn359. Cys365 (nucleophile) is an active-site residue.

Belongs to the succinylarginine dihydrolase family. As to quaternary structure, homodimer.

The catalysed reaction is N(2)-succinyl-L-arginine + 2 H2O + 2 H(+) = N(2)-succinyl-L-ornithine + 2 NH4(+) + CO2. Its pathway is amino-acid degradation; L-arginine degradation via AST pathway; L-glutamate and succinate from L-arginine: step 2/5. Functionally, catalyzes the hydrolysis of N(2)-succinylarginine into N(2)-succinylornithine, ammonia and CO(2). The polypeptide is N-succinylarginine dihydrolase (Shigella boydii serotype 4 (strain Sb227)).